We begin with the raw amino-acid sequence, 246 residues long: Small ribosomal subunit protein uS2 (246 aa).

This sequence belongs to the universal ribosomal protein uS2 family.

This is Small ribosomal subunit protein uS2 from Dictyoglomus turgidum (strain DSM 6724 / Z-1310).